The following is a 232-amino-acid chain: Orotate phosphoribosyltransferase (232 aa).

5-phospho-alpha-D-ribose 1-diphosphate contacts are provided by residues Arg-107, Lys-108, Lys-111, His-113, and 133–141 (EDLTTAGGS). Thr-137 contacts orotate.

The protein belongs to the purine/pyrimidine phosphoribosyltransferase family. PyrE subfamily. As to quaternary structure, homodimer. Mg(2+) serves as cofactor.

It carries out the reaction orotidine 5'-phosphate + diphosphate = orotate + 5-phospho-alpha-D-ribose 1-diphosphate. It participates in pyrimidine metabolism; UMP biosynthesis via de novo pathway; UMP from orotate: step 1/2. Catalyzes the transfer of a ribosyl phosphate group from 5-phosphoribose 1-diphosphate to orotate, leading to the formation of orotidine monophosphate (OMP). The protein is Orotate phosphoribosyltransferase of Sinorhizobium medicae (strain WSM419) (Ensifer medicae).